The sequence spans 554 residues: Malate synthase 2 (554 aa).

Arg-177 functions as the Proton acceptor in the catalytic mechanism. The active-site Proton donor is Asp-457. The SKL peroxisome targeting motif motif lies at Ser-552–Leu-554.

Belongs to the malate synthase family. In terms of assembly, interacts with PEX9.

It is found in the peroxisome matrix. The enzyme catalyses glyoxylate + acetyl-CoA + H2O = (S)-malate + CoA + H(+). Allantoin metabolism-specific malate synthase involved in the recycling the glyoxylate generated during allantoin degradation by the ureidoglycollate (UG) hydrolase reaction. This Saccharomyces cerevisiae (strain ATCC 204508 / S288c) (Baker's yeast) protein is Malate synthase 2.